A 564-amino-acid polypeptide reads, in one-letter code: Chaperonin GroEL 2 (564 aa).

Residues 29–32 (TIGP), 86–90 (DGTTT), glycine 413, and aspartate 493 each bind ATP. Residues 521-541 (DKPEPPAPAGDGGGDPMGGMG) form a disordered region. The segment covering 530 to 541 (GDGGGDPMGGMG) has biased composition (gly residues).

It belongs to the chaperonin (HSP60) family. In terms of assembly, forms a cylinder of 14 subunits composed of two heptameric rings stacked back-to-back. Interacts with the co-chaperonin GroES.

Its subcellular location is the cytoplasm. The enzyme catalyses ATP + H2O + a folded polypeptide = ADP + phosphate + an unfolded polypeptide.. Its function is as follows. Together with its co-chaperonin GroES, plays an essential role in assisting protein folding. The GroEL-GroES system forms a nano-cage that allows encapsulation of the non-native substrate proteins and provides a physical environment optimized to promote and accelerate protein folding. The sequence is that of Chaperonin GroEL 2 from Prochlorococcus marinus (strain MIT 9303).